The following is an 89-amino-acid chain: Small ribosomal subunit protein uS15 (89 aa).

Positions 1–10 (MSITAEKKQE) are enriched in basic and acidic residues. A disordered region spans residues 1 to 24 (MSITAEKKQEVIQSNARAEGDTGS).

The protein belongs to the universal ribosomal protein uS15 family. In terms of assembly, part of the 30S ribosomal subunit. Forms a bridge to the 50S subunit in the 70S ribosome, contacting the 23S rRNA.

Functionally, one of the primary rRNA binding proteins, it binds directly to 16S rRNA where it helps nucleate assembly of the platform of the 30S subunit by binding and bridging several RNA helices of the 16S rRNA. Its function is as follows. Forms an intersubunit bridge (bridge B4) with the 23S rRNA of the 50S subunit in the ribosome. The protein is Small ribosomal subunit protein uS15 of Novosphingobium aromaticivorans (strain ATCC 700278 / DSM 12444 / CCUG 56034 / CIP 105152 / NBRC 16084 / F199).